Reading from the N-terminus, the 320-residue chain is o-succinylbenzoate synthase (320 aa).

The Proton donor role is filled by lysine 133. The Mg(2+) site is built by aspartate 161, glutamate 190, and aspartate 213. Residue lysine 235 is the Proton acceptor of the active site.

This sequence belongs to the mandelate racemase/muconate lactonizing enzyme family. MenC type 1 subfamily. The cofactor is a divalent metal cation.

It catalyses the reaction (1R,6R)-6-hydroxy-2-succinyl-cyclohexa-2,4-diene-1-carboxylate = 2-succinylbenzoate + H2O. It participates in quinol/quinone metabolism; 1,4-dihydroxy-2-naphthoate biosynthesis; 1,4-dihydroxy-2-naphthoate from chorismate: step 4/7. It functions in the pathway quinol/quinone metabolism; menaquinone biosynthesis. Functionally, converts 2-succinyl-6-hydroxy-2,4-cyclohexadiene-1-carboxylate (SHCHC) to 2-succinylbenzoate (OSB). The protein is o-succinylbenzoate synthase of Escherichia fergusonii (strain ATCC 35469 / DSM 13698 / CCUG 18766 / IAM 14443 / JCM 21226 / LMG 7866 / NBRC 102419 / NCTC 12128 / CDC 0568-73).